A 291-amino-acid chain; its full sequence is Hydroxysteroid 11-beta-dehydrogenase 1-like protein B (291 aa).

An N-terminal signal peptide occupies residues 1–17 (MAGVILLLLSLCVGYIA). Residues 40–66 (GSST…TARR), 91–92 (DM), and 118–120 (NHI) contribute to the NADP(+) site. A substrate-binding site is contributed by Ser-170. Tyr-183 serves as the catalytic Proton acceptor. Residues 183-187 (YCASK) and 216-222 (GYIDTEN) each bind NADP(+).

This sequence belongs to the short-chain dehydrogenases/reductases (SDR) family.

The protein localises to the secreted. The catalysed reaction is cortisone + NADPH + H(+) = cortisol + NADP(+). Its function is as follows. Unidirectional NADP(+)-dependent cortisol dehydrogenase (in vitro). This Xenopus laevis (African clawed frog) protein is Hydroxysteroid 11-beta-dehydrogenase 1-like protein B (hsd11b1l-b).